A 417-amino-acid chain; its full sequence is Paired box protein Pax-2 (417 aa).

Positions 16–142 (GHGGVNQLGG…SSINRIIRTK (127 aa)) form a DNA-binding region, paired. The interval 19 to 75 (GVNQLGGVFVNGRPLPDVVRQRIVELAHQGVRPCDISRQLRVSHGCVSKILGRYYET) is PAI subdomain. The interval 94 to 142 (KVVDKIAEYKRQNPTMFAWEIRDRLLAEGICDNDTVPSVSSINRIIRTK) is RED subdomain. At Thr226 the chain carries Phosphothreonine. Positions 304–325 (KSSLSASTNPELGSNVSGTQTY) are disordered. A compositionally biased stretch (polar residues) spans 305-325 (SSLSASTNPELGSNVSGTQTY).

In terms of assembly, interacts with ELGN3; the interaction targets PAX2 for destruction. Interacts with TLE4. As to expression, expressed in primitive cells of the kidney, ureter, eye, ear and central nervous system.

It localises to the nucleus. Its function is as follows. Transcription factor that may have a role in kidney cell differentiation. Has a critical role in the development of the urogenital tract, the eyes, and the CNS. The polypeptide is Paired box protein Pax-2 (PAX2) (Homo sapiens (Human)).